Consider the following 267-residue polypeptide: Tetrahydromethanopterin S-methyltransferase subunit C (267 aa).

The next 7 helical transmembrane spans lie at 19–39, 40–60, 75–95, 96–116, 131–151, 162–182, and 221–241; these read IMAI…FMPA, QFSF…ADAV, IGMI…SVGG, IAGP…IGVL, AMVE…VVIA, YVVA…GILH, and GLMA…WAFM.

The protein belongs to the MtrC family. In terms of assembly, the complex is composed of 8 subunits; MtrA, MtrB, MtrC, MtrD, MtrE, MtrF, MtrG and MtrH.

It localises to the cell membrane. The enzyme catalyses 5-methyl-5,6,7,8-tetrahydromethanopterin + coenzyme M + 2 Na(+)(in) = 5,6,7,8-tetrahydromethanopterin + methyl-coenzyme M + 2 Na(+)(out). The protein operates within one-carbon metabolism; methanogenesis from CO(2); methyl-coenzyme M from 5,10-methylene-5,6,7,8-tetrahydromethanopterin: step 2/2. In terms of biological role, part of a complex that catalyzes the formation of methyl-coenzyme M and tetrahydromethanopterin from coenzyme M and methyl-tetrahydromethanopterin. This is an energy-conserving, sodium-ion translocating step. The polypeptide is Tetrahydromethanopterin S-methyltransferase subunit C (Methanosarcina acetivorans (strain ATCC 35395 / DSM 2834 / JCM 12185 / C2A)).